Consider the following 483-residue polypeptide: Glutamyl-tRNA(Gln) amidotransferase subunit A (483 aa).

Catalysis depends on charge relay system residues Lys76 and Ser151. Ser175 acts as the Acyl-ester intermediate in catalysis.

Belongs to the amidase family. GatA subfamily. In terms of assembly, heterotrimer of A, B and C subunits.

It catalyses the reaction L-glutamyl-tRNA(Gln) + L-glutamine + ATP + H2O = L-glutaminyl-tRNA(Gln) + L-glutamate + ADP + phosphate + H(+). Functionally, allows the formation of correctly charged Gln-tRNA(Gln) through the transamidation of misacylated Glu-tRNA(Gln) in organisms which lack glutaminyl-tRNA synthetase. The reaction takes place in the presence of glutamine and ATP through an activated gamma-phospho-Glu-tRNA(Gln). The polypeptide is Glutamyl-tRNA(Gln) amidotransferase subunit A (Pseudomonas entomophila (strain L48)).